Reading from the N-terminus, the 283-residue chain is Pantothenate synthetase (283 aa).

26–33 (MGNLHDGH) is a binding site for ATP. Residue His-33 is the Proton donor of the active site. Gln-57 is a binding site for (R)-pantoate. Gln-57 lines the beta-alanine pocket. 148–151 (GKKD) contacts ATP. Residue Gln-154 participates in (R)-pantoate binding. ATP is bound by residues Ala-177 and 185-188 (LSSR).

Belongs to the pantothenate synthetase family. Homodimer.

It localises to the cytoplasm. The catalysed reaction is (R)-pantoate + beta-alanine + ATP = (R)-pantothenate + AMP + diphosphate + H(+). Its pathway is cofactor biosynthesis; (R)-pantothenate biosynthesis; (R)-pantothenate from (R)-pantoate and beta-alanine: step 1/1. In terms of biological role, catalyzes the condensation of pantoate with beta-alanine in an ATP-dependent reaction via a pantoyl-adenylate intermediate. The chain is Pantothenate synthetase from Delftia acidovorans (strain DSM 14801 / SPH-1).